We begin with the raw amino-acid sequence, 136 residues long: Large ribosomal subunit protein eL27 (136 aa).

The KOW domain occupies 5 to 40 (MKPGKVVMVLAGRYAGRKAVIVKNIDDGTADRPYSH).

Belongs to the eukaryotic ribosomal protein eL27 family. Component of the large ribosomal subunit.

It localises to the cytoplasm. It is found in the cytosol. The protein localises to the rough endoplasmic reticulum. Component of the large ribosomal subunit. The chain is Large ribosomal subunit protein eL27 (rpl27) from Ictalurus punctatus (Channel catfish).